Here is a 188-residue protein sequence, read N- to C-terminus: Elongation factor P (188 aa).

This sequence belongs to the elongation factor P family.

Its subcellular location is the cytoplasm. Its pathway is protein biosynthesis; polypeptide chain elongation. Functionally, involved in peptide bond synthesis. Stimulates efficient translation and peptide-bond synthesis on native or reconstituted 70S ribosomes in vitro. Probably functions indirectly by altering the affinity of the ribosome for aminoacyl-tRNA, thus increasing their reactivity as acceptors for peptidyl transferase. This Wolbachia pipientis wMel protein is Elongation factor P.